Consider the following 244-residue polypeptide: Rho-related GTP-binding protein RhoE (244 aa).

30-37 (GDSQCGRT) provides a ligand contact to GTP. The Effector region signature appears at 52–60 (YVPTVFENY). GTP-binding positions include 77–81 (DTSGS) and 135–138 (CKSD). The residue at position 241 (Cys-241) is a Cysteine methyl ester. Cys-241 is lipidated: S-farnesyl cysteine. Positions 242–244 (TVM) are cleaved as a propeptide — removed in mature form.

Belongs to the small GTPase superfamily. Rho family. Binds ROCK1. Interacts with UBXD5.

Its subcellular location is the cell membrane. In terms of biological role, binds GTP but lacks intrinsic GTPase activity and is resistant to Rho-specific GTPase-activating proteins. This Sus scrofa (Pig) protein is Rho-related GTP-binding protein RhoE (RND3).